Consider the following 468-residue polypeptide: Peroxisome proliferator-activated receptor alpha (468 aa).

Residues Asn-99 to Phe-173 constitute a DNA-binding region (nuclear receptor). NR C4-type zinc fingers lie at residues Cys-102–Cys-122 and Cys-139–Cys-161. Residues Phe-239–Asp-466 form the NR LBD domain. The interval Asp-304 to Leu-433 is required for heterodimerization with RXRA.

It belongs to the nuclear hormone receptor family. NR1 subfamily. In terms of assembly, heterodimer; with RXRA. This heterodimerization is required for DNA binding and transactivation activity. Interacts with NCOA3 coactivator. Interacts with CITED2; the interaction stimulates its transcriptional activity. Also interacts with PPARBP in vitro. Interacts with AKAP13, LPIN1, PRDM16 and coactivator NCOA6. Interacts with ASXL1 and ASXL2. Interacts with PER2. Interacts with SIRT1; the interaction seems to be modulated by NAD(+) levels. Interacts with CRY1 and CRY2. In hepatocytes, interacts with PAQR3 and HUWE1; the interactions promote PPARA poylubiquitination and HUWE1-mediated degradation. Phosphorylated. Post-translationally, ubiquitinated by E3 ubiquitin-protein ligase HUWE1; leading to proteasomal degradation. As to expression, expressed predominantly in liver and kidney.

Its subcellular location is the nucleus. Ligand-activated transcription factor. Key regulator of lipid metabolism. Activated by the endogenous ligand 1-palmitoyl-2-oleoyl-sn-glycerol-3-phosphocholine (16:0/18:1-GPC). Activated by oleylethanolamide, a naturally occurring lipid that regulates satiety. Receptor for peroxisome proliferators such as hypolipidemic drugs and fatty acids. Regulates the peroxisomal beta-oxidation pathway of fatty acids. Functions as a transcription activator for the ACOX1 and P450 genes. Transactivation activity requires heterodimerization with RXRA and is antagonized by NR2C2. May be required for the propagation of clock information to metabolic pathways regulated by PER2. The protein is Peroxisome proliferator-activated receptor alpha (Ppara) of Rattus norvegicus (Rat).